The following is a 456-amino-acid chain: Bifunctional protein GlmU (456 aa).

Residues 1-229 (MLNNAMSVVI…LSEVEGVNNR (229 aa)) form a pyrophosphorylase region. Residues 11-14 (LAAG), K25, Q76, 81-82 (GT), 103-105 (YGD), G140, E154, N169, and N227 contribute to the UDP-N-acetyl-alpha-D-glucosamine site. D105 serves as a coordination point for Mg(2+). N227 is a Mg(2+) binding site. The segment at 230-250 (LQLSRLERVYQSEQAEKLLLA) is linker. Positions 251 to 456 (GVMLRDPARF…EGWRRPVKKK (206 aa)) are N-acetyltransferase. The UDP-N-acetyl-alpha-D-glucosamine site is built by R333 and K351. Catalysis depends on H363, which acts as the Proton acceptor. Y366 and N377 together coordinate UDP-N-acetyl-alpha-D-glucosamine. Acetyl-CoA-binding positions include A380, 386–387 (NY), S405, A423, and R440.

It in the N-terminal section; belongs to the N-acetylglucosamine-1-phosphate uridyltransferase family. This sequence in the C-terminal section; belongs to the transferase hexapeptide repeat family. As to quaternary structure, homotrimer. It depends on Mg(2+) as a cofactor.

The protein localises to the cytoplasm. The catalysed reaction is alpha-D-glucosamine 1-phosphate + acetyl-CoA = N-acetyl-alpha-D-glucosamine 1-phosphate + CoA + H(+). It carries out the reaction N-acetyl-alpha-D-glucosamine 1-phosphate + UTP + H(+) = UDP-N-acetyl-alpha-D-glucosamine + diphosphate. It functions in the pathway nucleotide-sugar biosynthesis; UDP-N-acetyl-alpha-D-glucosamine biosynthesis; N-acetyl-alpha-D-glucosamine 1-phosphate from alpha-D-glucosamine 6-phosphate (route II): step 2/2. It participates in nucleotide-sugar biosynthesis; UDP-N-acetyl-alpha-D-glucosamine biosynthesis; UDP-N-acetyl-alpha-D-glucosamine from N-acetyl-alpha-D-glucosamine 1-phosphate: step 1/1. Its pathway is bacterial outer membrane biogenesis; LPS lipid A biosynthesis. In terms of biological role, catalyzes the last two sequential reactions in the de novo biosynthetic pathway for UDP-N-acetylglucosamine (UDP-GlcNAc). The C-terminal domain catalyzes the transfer of acetyl group from acetyl coenzyme A to glucosamine-1-phosphate (GlcN-1-P) to produce N-acetylglucosamine-1-phosphate (GlcNAc-1-P), which is converted into UDP-GlcNAc by the transfer of uridine 5-monophosphate (from uridine 5-triphosphate), a reaction catalyzed by the N-terminal domain. The protein is Bifunctional protein GlmU of Escherichia coli O8 (strain IAI1).